The sequence spans 385 residues: FK506-binding protein 5 (385 aa).

The 90-residue stretch at 26–115 (TNFVSVHYDA…RFEVELIGFW (90 aa)) folds into the PPIase FKBP-type domain. TPR repeat units follow at residues 128 to 161 (AEKK…IQDL), 177 to 210 (VSIQ…DMTK), and 211 to 244 (IKAY…AIGL).

It catalyses the reaction [protein]-peptidylproline (omega=180) = [protein]-peptidylproline (omega=0). Inhibited by both FK506 and rapamycin. PPIases accelerate the folding of proteins. It catalyzes the cis-trans isomerization of proline imidic peptide bonds in oligopeptides. The chain is FK506-binding protein 5 (FKBP5) from Rhizopus delemar (strain RA 99-880 / ATCC MYA-4621 / FGSC 9543 / NRRL 43880) (Mucormycosis agent).